The chain runs to 427 residues: Interleukin-13 receptor subunit alpha-1 (427 aa).

The signal sequence occupies residues 1 to 21 (MEWPARLCGLWALLLCAGGGG). At 22-343 (GGGGAAPTET…MSIGKKRNST (322 aa)) the chain is on the extracellular side. Fibronectin type-III domains follow at residues 34–123 (PVTN…PPEG), 128–226 (AVTE…TSRV), and 227–339 (KPDP…IGKK). Residues Asn37 and Asn61 are each glycosylated (N-linked (GlcNAc...) asparagine). Cystine bridges form between Cys62–Cys102, Cys95–Cys117, and Cys134–Cys144. N-linked (GlcNAc...) asparagine glycosylation is found at Asn105, Asn138, and Asn157. Cys173 and Cys185 are oxidised to a cystine. Residues Asn235, Asn265, Asn293, Asn329, and Asn341 are each glycosylated (N-linked (GlcNAc...) asparagine). 2 cysteine pairs are disulfide-bonded: Cys257/Cys320 and Cys282/Cys296. A WSXWS motif motif is present at residues 327-331 (WSNWS). The chain crosses the membrane as a helical span at residues 344 to 367 (LYITMLLIVPVIVAGAIIVLLLYL). Topologically, residues 368 to 427 (KRLKIIIFPPIPDPGKIFKEMFGDQNDDTLHWKKYDIYEKQTKEETDSVVLIENLKKASQ) are cytoplasmic. A Box 1 motif motif is present at residues 374–382 (IFPPIPDPG).

This sequence belongs to the type I cytokine receptor family. Type 5 subfamily. Interleukin-13 receptor is a complex of IL4R, IL13RA1, and possibly other components. Interacts with TRAF3IP1. Interacts with IL4. As to expression, ubiquitous. Highest levels in heart, liver, skeletal muscle and ovary; lowest levels in brain, lung and kidney. Also found in B-cells, T-cells and endothelial cells.

The protein localises to the membrane. Functionally, binds with low affinity to interleukin-13 (IL13). Together with IL4RA can form a functional receptor for IL13. Also serves as an alternate accessory protein to the common cytokine receptor gamma chain for interleukin-4 (IL4) signaling, but cannot replace the function of IL2RG in allowing enhanced interleukin-2 (IL2) binding activity. The polypeptide is Interleukin-13 receptor subunit alpha-1 (IL13RA1) (Homo sapiens (Human)).